The sequence spans 100 residues: Large ribosomal subunit protein uL23 (100 aa).

This sequence belongs to the universal ribosomal protein uL23 family. In terms of assembly, part of the 50S ribosomal subunit. Contacts protein L29, and trigger factor when it is bound to the ribosome.

Its function is as follows. One of the early assembly proteins it binds 23S rRNA. One of the proteins that surrounds the polypeptide exit tunnel on the outside of the ribosome. Forms the main docking site for trigger factor binding to the ribosome. The polypeptide is Large ribosomal subunit protein uL23 (Pasteurella multocida (strain Pm70)).